The following is a 414-amino-acid chain: Serine hydroxymethyltransferase (414 aa).

(6S)-5,6,7,8-tetrahydrofolate-binding positions include L116 and 120-122 (GHL). K224 is subject to N6-(pyridoxal phosphate)lysine. (6S)-5,6,7,8-tetrahydrofolate contacts are provided by residues E240 and 348 to 350 (SPF).

It belongs to the SHMT family. As to quaternary structure, homodimer. Pyridoxal 5'-phosphate serves as cofactor.

Its subcellular location is the cytoplasm. The enzyme catalyses (6R)-5,10-methylene-5,6,7,8-tetrahydrofolate + glycine + H2O = (6S)-5,6,7,8-tetrahydrofolate + L-serine. It participates in one-carbon metabolism; tetrahydrofolate interconversion. It functions in the pathway amino-acid biosynthesis; glycine biosynthesis; glycine from L-serine: step 1/1. Functionally, catalyzes the reversible interconversion of serine and glycine with tetrahydrofolate (THF) serving as the one-carbon carrier. This reaction serves as the major source of one-carbon groups required for the biosynthesis of purines, thymidylate, methionine, and other important biomolecules. Also exhibits THF-independent aldolase activity toward beta-hydroxyamino acids, producing glycine and aldehydes, via a retro-aldol mechanism. This is Serine hydroxymethyltransferase from Campylobacter jejuni (strain RM1221).